A 396-amino-acid chain; its full sequence is 1-deoxy-D-xylulose 5-phosphate reductoisomerase (396 aa).

NADPH-binding residues include Thr15, Gly16, Ile18, and Asn127. Position 128 (Lys128) interacts with 1-deoxy-D-xylulose 5-phosphate. Glu129 provides a ligand contact to NADPH. Asp153 contacts Mn(2+). The 1-deoxy-D-xylulose 5-phosphate site is built by Ser154, Glu155, Ser177, and His200. Glu155 contributes to the Mn(2+) binding site. Residue Gly206 participates in NADPH binding. Positions 213, 218, 219, and 222 each coordinate 1-deoxy-D-xylulose 5-phosphate. Glu222 provides a ligand contact to Mn(2+).

It belongs to the DXR family. Mg(2+) is required as a cofactor. The cofactor is Mn(2+).

The catalysed reaction is 2-C-methyl-D-erythritol 4-phosphate + NADP(+) = 1-deoxy-D-xylulose 5-phosphate + NADPH + H(+). The protein operates within isoprenoid biosynthesis; isopentenyl diphosphate biosynthesis via DXP pathway; isopentenyl diphosphate from 1-deoxy-D-xylulose 5-phosphate: step 1/6. Its function is as follows. Catalyzes the NADPH-dependent rearrangement and reduction of 1-deoxy-D-xylulose-5-phosphate (DXP) to 2-C-methyl-D-erythritol 4-phosphate (MEP). The chain is 1-deoxy-D-xylulose 5-phosphate reductoisomerase from Anaplasma marginale (strain Florida).